The chain runs to 258 residues: Synapse differentiation-inducing gene protein 1-like (258 aa).

At 1–182 (MESLSELQNP…FIVIPPRDHL (182 aa)) the chain is on the extracellular side. The chain crosses the membrane as a helical span at residues 183–203 (GLAIFSMLCCFWPLGIAAFYF). Residues 204-228 (SQGTSKAVTKGDFPLASIASRRALF) lie on the Cytoplasmic side of the membrane. Residues 229 to 249 (LAALSITIGTGVYVGVVVALI) traverse the membrane as a helical segment. Topologically, residues 250-258 (AYLSKPGHI) are extracellular.

The protein belongs to the CD225/Dispanin family.

It is found in the membrane. The protein resides in the golgi apparatus. It localises to the cis-Golgi network. This Danio rerio (Zebrafish) protein is Synapse differentiation-inducing gene protein 1-like (syndig1l).